A 58-amino-acid polypeptide reads, in one-letter code: Potassium channel toxin alpha-KTx 26.2 (58 aa).

Residues 1-19 (MKTIFVVILVLFVLSAMLA) form the signal peptide. Disulfide bonds link Cys-31–Cys-49, Cys-35–Cys-54, and Cys-39–Cys-56.

It belongs to the short scorpion toxin superfamily. Potassium channel inhibitor family. Alpha-KTx 26 subfamily. As to expression, expressed by the venom gland.

The protein localises to the secreted. Its function is as follows. Inhibits voltage-gated potassium channels. The polypeptide is Potassium channel toxin alpha-KTx 26.2 (Lychas mucronatus (Chinese swimming scorpion)).